A 148-amino-acid chain; its full sequence is Hemoglobin subunit beta-B (148 aa).

Positions 3–148 (DWTDAERAAI…VVSALGRQYH (146 aa)) constitute a Globin domain. Heme b contacts are provided by His-64 and His-93.

This sequence belongs to the globin family. Heterotetramer of two alpha chains and two beta chains. In terms of tissue distribution, red blood cells.

Involved in oxygen transport from gills to the various peripheral tissues. The sequence is that of Hemoglobin subunit beta-B (hbb2) from Seriola quinqueradiata (Five-ray yellowtail).